Consider the following 233-residue polypeptide: Orotidine 5'-phosphate decarboxylase (233 aa).

Residues aspartate 11, lysine 34, 61–70, threonine 117, arginine 179, glutamine 188, glycine 208, and arginine 209 each bind substrate; that span reads DLKLHDIPNT. The active-site Proton donor is lysine 63.

It belongs to the OMP decarboxylase family. Type 1 subfamily. As to quaternary structure, homodimer.

It catalyses the reaction orotidine 5'-phosphate + H(+) = UMP + CO2. The protein operates within pyrimidine metabolism; UMP biosynthesis via de novo pathway; UMP from orotate: step 2/2. Functionally, catalyzes the decarboxylation of orotidine 5'-monophosphate (OMP) to uridine 5'-monophosphate (UMP). This chain is Orotidine 5'-phosphate decarboxylase, found in Streptococcus pneumoniae (strain P1031).